The following is a 644-amino-acid chain: Polyglycine hydrolase (644 aa).

The first 23 residues, 1 to 23 (MYTSRSLFSTLASCLSLATLVAS), serve as a signal peptide directing secretion. Residues asparagine 100, asparagine 144, asparagine 159, asparagine 244, and asparagine 340 are each glycosylated (N-linked (GlcNAc...) asparagine). A disulfide bond links cysteine 149 and cysteine 183. Residue serine 369 is part of the active site. N-linked (GlcNAc...) asparagine glycans are attached at residues asparagine 389, asparagine 410, asparagine 443, and asparagine 486.

The protein belongs to the peptidase S12 family.

The protein localises to the secreted. It carries out the reaction a glycyl-glycyl-[protein] + H2O = N-terminal glycyl-[protein] + [protein]-C-terminal glycine. Its activity is regulated as follows. Not inhibited by phenylmethylsulfonyl fluoride (PMSF; serine peptidase class S1 inhibitor), clavulanic acid (beta-lactamase inhibitor) or ampicillin (penicillin-binding protein (PBP) inhibitor). Its function is as follows. Serine-type endopeptidase that cleaves Gly-Gly bonds in the polyglycine linker of host plant class IV chitinases to disrupt their chitin-binding, and thereby plays a role in lowering the defense responses of the host to the fungus. Degrades Z.mays Endochitinase A (CHIA). Has low proteolytic activity on Z.mays Endochitinase B (CHIB). The protein is Polyglycine hydrolase of Cochliobolus carbonum (strain 26-R-13) (Maize leaf spot fungus).